The primary structure comprises 408 residues: WD repeat-containing protein JIP5 (408 aa).

WD repeat units lie at residues Pro5–Asn44, Pro50–Ile86, Asp87–Thr130, Gln133–Val172, Asp177–Val216, and Gly221–Val267. The interval Val311–Leu408 is disordered. Composition is skewed to acidic residues over residues Ser313–Glu339 and Asp356–Glu366. Positions Lys396–Leu408 are enriched in basic and acidic residues.

This sequence belongs to the WD repeat WDR55 family.

It is found in the nucleus. The protein localises to the nucleolus. This Coprinopsis cinerea (strain Okayama-7 / 130 / ATCC MYA-4618 / FGSC 9003) (Inky cap fungus) protein is WD repeat-containing protein JIP5 (JIP5).